Consider the following 203-residue polypeptide: Endo-type membrane-bound lytic murein transglycosylase A (203 aa).

Positions 1-15 (MKLRWLMWLVVFLAG) are cleaved as a signal peptide. Cys16 carries the N-palmitoyl cysteine lipid modification. Residue Cys16 is the site of S-diacylglycerol cysteine attachment.

This sequence belongs to the transglycosylase Slt family.

It localises to the cell outer membrane. The enzyme catalyses Endolytic cleavage of the (1-&gt;4)-beta-glycosidic linkage between N-acetylmuramic acid (MurNAc) and N-acetylglucosamine (GlcNAc) residues in peptidoglycan with concomitant formation of a 1,6-anhydrobond in the MurNAc residue.. Functionally, murein-degrading enzyme. May play a role in recycling of muropeptides during cell elongation and/or cell division. Preferentially cleaves at a distance of more than two disaccharide units from the ends of the glycan chain. This Cronobacter sakazakii (strain ATCC BAA-894) (Enterobacter sakazakii) protein is Endo-type membrane-bound lytic murein transglycosylase A.